The chain runs to 939 residues: Isoleucine--tRNA ligase (939 aa).

A 'HIGH' region motif is present at residues 57 to 67 (PYANGEIHIGH). Glu563 serves as a coordination point for L-isoleucyl-5'-AMP. A 'KMSKS' region motif is present at residues 604–608 (KMSKS). ATP is bound at residue Lys607. Positions 902, 905, 922, and 925 each coordinate Zn(2+).

The protein belongs to the class-I aminoacyl-tRNA synthetase family. IleS type 1 subfamily. In terms of assembly, monomer. The cofactor is Zn(2+).

It is found in the cytoplasm. The catalysed reaction is tRNA(Ile) + L-isoleucine + ATP = L-isoleucyl-tRNA(Ile) + AMP + diphosphate. Functionally, catalyzes the attachment of isoleucine to tRNA(Ile). As IleRS can inadvertently accommodate and process structurally similar amino acids such as valine, to avoid such errors it has two additional distinct tRNA(Ile)-dependent editing activities. One activity is designated as 'pretransfer' editing and involves the hydrolysis of activated Val-AMP. The other activity is designated 'posttransfer' editing and involves deacylation of mischarged Val-tRNA(Ile). The sequence is that of Isoleucine--tRNA ligase from Methylococcus capsulatus (strain ATCC 33009 / NCIMB 11132 / Bath).